Here is a 421-residue protein sequence, read N- to C-terminus: MLEGDEKQSRALDFNRLEVLSLLGRGAKGVVFLVRDDDAKLLALKVILKEAIEKKKKGRESEDDEYKRVSFEQGVLSRFDHPLFPSLHGVLATDKVIGYAIDYCPGQNLNSLRKMQSESMFSDEIIRFYAAELVLALDYLHNQGIVYRDLKPDNVMIQENGHLMLIDFDLSTNLAPRTPQPSPSLSKPSPTMKRKKRLFRFTSFCNSGISPQESISVHSSSTLAVSDSSGEKSNSFVGTEEYVAPEVISGDGHDFAVDWWSLGVVLYEMLYGATPFRGSNRKETFYRILSKPPNLTGETTSLRDLIRRLLEKDPSRRINVEEIKGHDFFRGVDWEKVILVSRPPYIPAPDDGGDKGTDVNTKMDVENIVQEIFAARQEREKQSGDNNKNANMKIKDNTSGEWVKGLNNNHDLESDNNFLVF.

Positions 17-329 (LEVLSLLGRG…VEEIKGHDFF (313 aa)) constitute a Protein kinase domain. Residues 23 to 31 (LGRGAKGVV) and lysine 45 contribute to the ATP site. The active-site Proton acceptor is the aspartate 149. Positions 167 to 246 (DFDLSTNLAP…VGTEEYVAPE (80 aa)) are activation loop. Serine 235 carries the phosphoserine; by PDPK1 modification. Residues 330-421 (RGVDWEKVIL…LESDNNFLVF (92 aa)) form the AGC-kinase C-terminal domain. The PIF signature appears at 418 to 421 (FLVF).

The protein belongs to the protein kinase superfamily. AGC Ser/Thr protein kinase family. Interacts with PDK1 and PDK2. Expressed in roots and root hair cells.

It catalyses the reaction L-seryl-[protein] + ATP = O-phospho-L-seryl-[protein] + ADP + H(+). The catalysed reaction is L-threonyl-[protein] + ATP = O-phospho-L-threonyl-[protein] + ADP + H(+). Its activity is regulated as follows. Activated in response to hydrogen peroxide and cellulase elicitor. Activated by PDK1 in a phosphatidic acid dependent manner. Involved in oxidative burst-mediated signaling. Required for basal resistance to P.parasitica infection and root hair growth. Partly required for the activation of MPK3 and MPK6 by hydrogen peroxide and cellulase elicitor. This Arabidopsis thaliana (Mouse-ear cress) protein is Serine/threonine-protein kinase OXI1.